Here is a 455-residue protein sequence, read N- to C-terminus: Retinoic acid receptor beta (455 aa).

The tract at residues 1–87 is modulating; the sequence is MTTSGHACPV…PLPPPRVYKP (87 aa). The tract at residues 47–78 is disordered; that stretch reads HPPPSGCSTPSPATIETQSTSSEELVPSPPSP. Over residues 53-66 the composition is skewed to polar residues; that stretch reads CSTPSPATIETQST. Ser-77 is modified (phosphoserine). 2 consecutive NR C4-type zinc fingers follow at residues 88–108 and 124–148; these read CFVC…CEGC and CHRD…LQKC. Residues 88 to 153 constitute a DNA-binding region (nuclear receptor); the sequence is CFVCQDKSSG…RLQKCFEVGM (66 aa). Residues 154-182 are hinge; it reads SKESVRNDRNKKKKETSKQECTESYEMTA. An NR LBD domain is found at 183 to 417; it reads ELDDLTEKIR…PLIQEMLENS (235 aa). Residues 415–455 are disordered; the sequence is ENSEGHEPLTPSSSGNTAEHSPSISPSSVENSGVSQSPLVQ. Residues 424–434 are compositionally biased toward polar residues; it reads TPSSSGNTAEH. Low complexity predominate over residues 435–455; it reads SPSISPSSVENSGVSQSPLVQ.

This sequence belongs to the nuclear hormone receptor family. NR1 subfamily. As to quaternary structure, homodimer. Heterodimer; with a RXR molecule. Binds DNA preferentially as a RAR/RXR heterodimer. Heterodimerizes (via NR LBD) with RXRA. Interacts weakly with NCOR2. As to expression, expressed in aortic endothelial cells (at protein level).

It localises to the nucleus. The protein localises to the cytoplasm. Functionally, receptor for retinoic acid. Retinoic acid receptors bind as heterodimers to their target response elements in response to their ligands, all-trans or 9-cis retinoic acid, and regulate gene expression in various biological processes. The RXR/RAR heterodimers bind to the retinoic acid response elements (RARE) composed of tandem 5'-AGGTCA-3' sites known as DR1-DR5. In the absence or presence of hormone ligand, acts mainly as an activator of gene expression due to weak binding to corepressors. The RXRA/RARB heterodimer can act as a repressor on the DR1 element and as an activator on the DR5 element. In concert with RARG, required for skeletal growth, matrix homeostasis and growth plate function. The chain is Retinoic acid receptor beta (RARB) from Homo sapiens (Human).